The chain runs to 304 residues: Tyrosine recombinase XerC (304 aa).

Residues 6 to 92 (NKLYLQAQAY…VLRQWFAYLV (87 aa)) enclose the Core-binding (CB) domain. The region spanning 113 to 292 (HLPKNIDAER…DFQHLAKIYD (180 aa)) is the Tyr recombinase domain. Active-site residues include arginine 152, lysine 176, histidine 244, arginine 247, and histidine 270. Tyrosine 279 serves as the catalytic O-(3'-phospho-DNA)-tyrosine intermediate.

It belongs to the 'phage' integrase family. XerC subfamily. As to quaternary structure, forms a cyclic heterotetrameric complex composed of two molecules of XerC and two molecules of XerD.

It localises to the cytoplasm. Its function is as follows. Site-specific tyrosine recombinase, which acts by catalyzing the cutting and rejoining of the recombining DNA molecules. The XerC-XerD complex is essential to convert dimers of the bacterial chromosome into monomers to permit their segregation at cell division. It also contributes to the segregational stability of plasmids. The sequence is that of Tyrosine recombinase XerC from Haemophilus ducreyi (strain 35000HP / ATCC 700724).